The following is a 297-amino-acid chain: 33 kDa chaperonin (297 aa).

Disulfide bonds link Cys-233/Cys-235 and Cys-267/Cys-270.

It belongs to the HSP33 family. In terms of processing, under oxidizing conditions two disulfide bonds are formed involving the reactive cysteines. Under reducing conditions zinc is bound to the reactive cysteines and the protein is inactive.

It localises to the cytoplasm. Redox regulated molecular chaperone. Protects both thermally unfolding and oxidatively damaged proteins from irreversible aggregation. Plays an important role in the bacterial defense system toward oxidative stress. This is 33 kDa chaperonin from Haemophilus ducreyi (strain 35000HP / ATCC 700724).